The primary structure comprises 134 residues: L-ectoine synthase (134 aa).

The protein belongs to the ectoine synthase family.

The enzyme catalyses (2S)-4-acetamido-2-aminobutanoate = L-ectoine + H2O. The protein operates within amine and polyamine biosynthesis; ectoine biosynthesis; L-ectoine from L-aspartate 4-semialdehyde: step 3/3. Catalyzes the circularization of gamma-N-acetyl-alpha,gamma-diaminobutyric acid (ADABA) to ectoine (1,4,5,6-tetrahydro-2-methyl-4-pyrimidine carboxylic acid), which is an excellent osmoprotectant. The protein is L-ectoine synthase of Thermobifida fusca (strain YX).